Here is a 265-residue protein sequence, read N- to C-terminus: Undecaprenyl-diphosphatase (265 aa).

Helical transmembrane passes span 15–37 (GLTE…LLEY), 41–61 (KAES…VFLY), 85–105 (YLLA…HSFI), 109–129 (LFGP…ILAV), 144–164 (VSPA…WPGF), 183–203 (LAAE…TGYD), 218–238 (FWAV…KGFI), and 244–264 (VTFR…LLFW).

Belongs to the UppP family.

It is found in the cell inner membrane. It catalyses the reaction di-trans,octa-cis-undecaprenyl diphosphate + H2O = di-trans,octa-cis-undecaprenyl phosphate + phosphate + H(+). Its function is as follows. Catalyzes the dephosphorylation of undecaprenyl diphosphate (UPP). Confers resistance to bacitracin. The chain is Undecaprenyl-diphosphatase from Oleidesulfovibrio alaskensis (strain ATCC BAA-1058 / DSM 17464 / G20) (Desulfovibrio alaskensis).